Here is a 502-residue protein sequence, read N- to C-terminus: ATP synthase subunit alpha (502 aa).

169–176 serves as a coordination point for ATP; the sequence is GDRQTGKT.

This sequence belongs to the ATPase alpha/beta chains family. In terms of assembly, F-type ATPases have 2 components, CF(1) - the catalytic core - and CF(0) - the membrane proton channel. CF(1) has five subunits: alpha(3), beta(3), gamma(1), delta(1), epsilon(1). CF(0) has three main subunits: a(1), b(2) and c(9-12). The alpha and beta chains form an alternating ring which encloses part of the gamma chain. CF(1) is attached to CF(0) by a central stalk formed by the gamma and epsilon chains, while a peripheral stalk is formed by the delta and b chains.

Its subcellular location is the cell membrane. The enzyme catalyses ATP + H2O + 4 H(+)(in) = ADP + phosphate + 5 H(+)(out). Its function is as follows. Produces ATP from ADP in the presence of a proton gradient across the membrane. The alpha chain is a regulatory subunit. This Staphylococcus aureus (strain COL) protein is ATP synthase subunit alpha.